A 95-amino-acid chain; its full sequence is Citrate lyase acyl carrier protein (95 aa).

Serine 14 carries the O-(phosphoribosyl dephospho-coenzyme A)serine modification.

The protein belongs to the CitD family. In terms of assembly, oligomer with a subunit composition of (alpha,beta,gamma)6.

It is found in the cytoplasm. In terms of biological role, covalent carrier of the coenzyme of citrate lyase. This is Citrate lyase acyl carrier protein from Haemophilus ducreyi (strain 35000HP / ATCC 700724).